Reading from the N-terminus, the 569-residue chain is Urease subunit alpha (569 aa).

Positions 131-569 (GGFDSHIHFI…LPMAQRYFLF (439 aa)) constitute a Urease domain. Positions 136, 138, and 219 each coordinate Ni(2+). N6-carboxylysine is present on K219. H221 provides a ligand contact to substrate. Ni(2+) is bound by residues H248 and H274. H322 acts as the Proton donor in catalysis. D362 is a Ni(2+) binding site.

The protein belongs to the metallo-dependent hydrolases superfamily. Urease alpha subunit family. As to quaternary structure, heterotrimer of UreA (gamma), UreB (beta) and UreC (alpha) subunits. Three heterotrimers associate to form the active enzyme. Requires Ni cation as cofactor. In terms of processing, carboxylation allows a single lysine to coordinate two nickel ions.

It is found in the cytoplasm. It catalyses the reaction urea + 2 H2O + H(+) = hydrogencarbonate + 2 NH4(+). It participates in nitrogen metabolism; urea degradation; CO(2) and NH(3) from urea (urease route): step 1/1. This is Urease subunit alpha from Ruegeria pomeroyi (strain ATCC 700808 / DSM 15171 / DSS-3) (Silicibacter pomeroyi).